The following is a 213-amino-acid chain: MHVHVVEHPLAAARLTTLRDARSDNAAFRTALRDLTLMLVYEATGSVPVESSTVRTPVAETTGYRLANPPLLVPVLRAGLGMVDQAHALIPEARVGFVGMARDEDTWQPTPYLESLPADLSAQPVFVLDPMLATGGSMVYTLELLHARGAADITMLCVVAAPQGVTAIQECAERFGPSTSVRLFTATIDEGLNDAAYIVPGLGDAGDRQFGPR.

5-phospho-alpha-D-ribose 1-diphosphate contacts are provided by residues arginine 77, arginine 102, and 129 to 137; that span reads DPMLATGGS. Uracil is bound by residues isoleucine 198 and 203 to 205; that span reads GDA. Aspartate 204 contributes to the 5-phospho-alpha-D-ribose 1-diphosphate binding site.

This sequence belongs to the UPRTase family. Mg(2+) is required as a cofactor.

It catalyses the reaction UMP + diphosphate = 5-phospho-alpha-D-ribose 1-diphosphate + uracil. Its pathway is pyrimidine metabolism; UMP biosynthesis via salvage pathway; UMP from uracil: step 1/1. With respect to regulation, allosterically activated by GTP. In terms of biological role, catalyzes the conversion of uracil and 5-phospho-alpha-D-ribose 1-diphosphate (PRPP) to UMP and diphosphate. The sequence is that of Uracil phosphoribosyltransferase from Mycobacteroides abscessus (strain ATCC 19977 / DSM 44196 / CCUG 20993 / CIP 104536 / JCM 13569 / NCTC 13031 / TMC 1543 / L948) (Mycobacterium abscessus).